Reading from the N-terminus, the 358-residue chain is Phosphate acyltransferase (358 aa).

The disordered stretch occupies residues 336 to 358 (SAAGAAPASPETAPTPHPSTRAA).

Belongs to the PlsX family. In terms of assembly, homodimer. Probably interacts with PlsY.

It is found in the cytoplasm. The enzyme catalyses a fatty acyl-[ACP] + phosphate = an acyl phosphate + holo-[ACP]. The protein operates within lipid metabolism; phospholipid metabolism. Functionally, catalyzes the reversible formation of acyl-phosphate (acyl-PO(4)) from acyl-[acyl-carrier-protein] (acyl-ACP). This enzyme utilizes acyl-ACP as fatty acyl donor, but not acyl-CoA. This chain is Phosphate acyltransferase, found in Cupriavidus pinatubonensis (strain JMP 134 / LMG 1197) (Cupriavidus necator (strain JMP 134)).